Reading from the N-terminus, the 150-residue chain is Ribosome maturation factor RimP (150 aa).

The protein belongs to the RimP family.

It localises to the cytoplasm. In terms of biological role, required for maturation of 30S ribosomal subunits. The polypeptide is Ribosome maturation factor RimP (Thermotoga petrophila (strain ATCC BAA-488 / DSM 13995 / JCM 10881 / RKU-1)).